We begin with the raw amino-acid sequence, 323 residues long: Acetyl-coenzyme A carboxylase carboxyl transferase subunit alpha (323 aa).

Residues 39–293 (RLSKKSQQLT…RRALADSLRQ (255 aa)) form the CoA carboxyltransferase C-terminal domain.

Belongs to the AccA family. In terms of assembly, acetyl-CoA carboxylase is a heterohexamer composed of biotin carboxyl carrier protein (AccB), biotin carboxylase (AccC) and two subunits each of ACCase subunit alpha (AccA) and ACCase subunit beta (AccD).

The protein localises to the cytoplasm. It catalyses the reaction N(6)-carboxybiotinyl-L-lysyl-[protein] + acetyl-CoA = N(6)-biotinyl-L-lysyl-[protein] + malonyl-CoA. It functions in the pathway lipid metabolism; malonyl-CoA biosynthesis; malonyl-CoA from acetyl-CoA: step 1/1. Component of the acetyl coenzyme A carboxylase (ACC) complex. First, biotin carboxylase catalyzes the carboxylation of biotin on its carrier protein (BCCP) and then the CO(2) group is transferred by the carboxyltransferase to acetyl-CoA to form malonyl-CoA. This is Acetyl-coenzyme A carboxylase carboxyl transferase subunit alpha from Paraburkholderia phymatum (strain DSM 17167 / CIP 108236 / LMG 21445 / STM815) (Burkholderia phymatum).